A 494-amino-acid chain; its full sequence is UDP-glucose 6-dehydrogenase (494 aa).

NAD(+) contacts are provided by residues glycine 11–glycine 16, aspartate 36, arginine 41, valine 89–threonine 93, and serine 130–valine 132. A disordered region spans residues serine 88–glutamate 110. The segment at lysine 129–arginine 135 is allosteric switch region. Glutamate 161 serves as the catalytic Proton donor/acceptor. Residues glutamate 161–glutamate 165, lysine 220–asparagine 224, arginine 260, and lysine 267–glycine 273 contribute to the substrate site. Glutamate 165 contributes to the NAD(+) binding site. Lysine 220 functions as the Proton donor/acceptor in the catalytic mechanism. Cysteine 276 (nucleophile) is an active-site residue. An NAD(+)-binding site is contributed by cysteine 276–lysine 279. Residues serine 321 to threonine 325 form an important for formation of active hexamer structure region. Residue phenylalanine 338–lysine 339 participates in substrate binding. Residue arginine 346 participates in NAD(+) binding. Arginine 442 contacts substrate. Residues valine 466–valine 494 are disordered.

The protein belongs to the UDP-glucose/GDP-mannose dehydrogenase family. Homohexamer.

It carries out the reaction UDP-alpha-D-glucose + 2 NAD(+) + H2O = UDP-alpha-D-glucuronate + 2 NADH + 3 H(+). The protein operates within nucleotide-sugar biosynthesis; UDP-alpha-D-glucuronate biosynthesis; UDP-alpha-D-glucuronate from UDP-alpha-D-glucose: step 1/1. With respect to regulation, UDP-alpha-D-xylose (UDX) acts as a feedback inhibitor. It binds at the same site as the substrate, but functions as allosteric inhibitor by triggering a conformation change that disrupts the active hexameric ring structure and gives rise to an inactive, horseshoe-shaped hexamer. Catalyzes the formation of UDP-alpha-D-glucuronate, a constituent of complex glycosaminoglycans. Required for the biosynthesis of chondroitin sulfate and heparan sulfate. Required for embryonic development via its role in the biosynthesis of glycosaminoglycans. The chain is UDP-glucose 6-dehydrogenase (UGDH) from Gallus gallus (Chicken).